Here is a 424-residue protein sequence, read N- to C-terminus: Adenylosuccinate synthetase 1 (424 aa).

GTP contacts are provided by residues 12-18 and 40-42; these read GDEGKGK and GHT. The Proton acceptor role is filled by Asp13. Residues Asp13 and Gly40 each coordinate Mg(2+). IMP is bound by residues 13 to 16, 38 to 41, Thr127, Arg141, Thr236, and Arg304; these read DEGK and NAGH. Catalysis depends on His41, which acts as the Proton donor. A substrate-binding site is contributed by 300 to 306; the sequence is ARTGRPR. GTP-binding positions include Arg306, 332-334, and 413-415; these read KLD and GVG.

This sequence belongs to the adenylosuccinate synthetase family. Homodimer. Requires Mg(2+) as cofactor.

The protein resides in the cytoplasm. The catalysed reaction is IMP + L-aspartate + GTP = N(6)-(1,2-dicarboxyethyl)-AMP + GDP + phosphate + 2 H(+). Its pathway is purine metabolism; AMP biosynthesis via de novo pathway; AMP from IMP: step 1/2. Its function is as follows. Plays an important role in the de novo pathway of purine nucleotide biosynthesis. Catalyzes the first committed step in the biosynthesis of AMP from IMP. The protein is Adenylosuccinate synthetase 1 of Methanosarcina acetivorans (strain ATCC 35395 / DSM 2834 / JCM 12185 / C2A).